A 229-amino-acid polypeptide reads, in one-letter code: Platelet-activating factor acetylhydrolase IB subunit alpha2 (229 aa).

Catalysis depends on residues serine 48, aspartate 193, and histidine 196.

Belongs to the 'GDSL' lipolytic enzyme family. Platelet-activating factor acetylhydrolase IB beta/gamma subunits subfamily. As to quaternary structure, forms a catalytic dimer which is either homodimer (alpha2/alpha2 homodimer) or heterodimer with PAFAH1B3 (alpha2/alpha1 heterodimer). Component of the cytosolic (PAF-AH (I)) heterotetrameric enzyme, which is composed of PAFAH1B1 (beta), PAFAH1B2 (alpha2) and PAFAH1B3 (alpha1) subunits. The catalytic activity of the enzyme resides in the alpha1 (PAFAH1B3) and alpha2 (PAFAH1B2) subunits, whereas the beta subunit (PAFAH1B1) has regulatory activity. Trimer formation is not essential for the catalytic activity.

It localises to the cytoplasm. It catalyses the reaction a 1-O-alkyl-2-acetyl-sn-glycero-3-phosphocholine + H2O = a 1-O-alkyl-sn-glycero-3-phosphocholine + acetate + H(+). It carries out the reaction 1-O-hexadecyl-2-acetyl-sn-glycero-3-phosphocholine + H2O = 1-O-hexadecyl-sn-glycero-3-phosphocholine + acetate + H(+). The enzyme catalyses 1-O-hexadecyl-2-acetyl-sn-glycero-3-phosphate + H2O = 1-O-hexadecyl-sn-glycero-3-phosphate + acetate + H(+). The catalysed reaction is 1-O-hexadecyl-2-acetyl-sn-glycero-3-phosphoethanolamine + H2O = 1-O-hexadecyl-sn-glycero-3-phosphoethanolamine + acetate + H(+). In terms of biological role, alpha2 catalytic subunit of the cytosolic type I platelet-activating factor (PAF) acetylhydrolase (PAF-AH (I)) heterotetrameric enzyme that catalyzes the hydrolyze of the acetyl group at the sn-2 position of PAF and its analogs and modulates the action of PAF. The sequence is that of Platelet-activating factor acetylhydrolase IB subunit alpha2 (PAFAH1B2) from Gallus gallus (Chicken).